Consider the following 420-residue polypeptide: 4-hydroxy-3-methylbut-2-en-1-yl diphosphate synthase (flavodoxin) (420 aa).

[4Fe-4S] cluster is bound by residues Cys307, Cys310, Cys353, and Glu360.

This sequence belongs to the IspG family. The cofactor is [4Fe-4S] cluster.

The catalysed reaction is (2E)-4-hydroxy-3-methylbut-2-enyl diphosphate + oxidized [flavodoxin] + H2O + 2 H(+) = 2-C-methyl-D-erythritol 2,4-cyclic diphosphate + reduced [flavodoxin]. It functions in the pathway isoprenoid biosynthesis; isopentenyl diphosphate biosynthesis via DXP pathway; isopentenyl diphosphate from 1-deoxy-D-xylulose 5-phosphate: step 5/6. Its function is as follows. Converts 2C-methyl-D-erythritol 2,4-cyclodiphosphate (ME-2,4cPP) into 1-hydroxy-2-methyl-2-(E)-butenyl 4-diphosphate. The sequence is that of 4-hydroxy-3-methylbut-2-en-1-yl diphosphate synthase (flavodoxin) from Brucella suis biovar 1 (strain 1330).